A 459-amino-acid polypeptide reads, in one-letter code: Exodeoxyribonuclease 7 large subunit (459 aa).

This sequence belongs to the XseA family. Heterooligomer composed of large and small subunits.

It is found in the cytoplasm. It carries out the reaction Exonucleolytic cleavage in either 5'- to 3'- or 3'- to 5'-direction to yield nucleoside 5'-phosphates.. Bidirectionally degrades single-stranded DNA into large acid-insoluble oligonucleotides, which are then degraded further into small acid-soluble oligonucleotides. The sequence is that of Exodeoxyribonuclease 7 large subunit from Pseudomonas aeruginosa (strain ATCC 15692 / DSM 22644 / CIP 104116 / JCM 14847 / LMG 12228 / 1C / PRS 101 / PAO1).